The primary structure comprises 201 residues: 3-isopropylmalate dehydratase small subunit (201 aa).

The protein belongs to the LeuD family. LeuD type 1 subfamily. In terms of assembly, heterodimer of LeuC and LeuD.

It carries out the reaction (2R,3S)-3-isopropylmalate = (2S)-2-isopropylmalate. The protein operates within amino-acid biosynthesis; L-leucine biosynthesis; L-leucine from 3-methyl-2-oxobutanoate: step 2/4. Its function is as follows. Catalyzes the isomerization between 2-isopropylmalate and 3-isopropylmalate, via the formation of 2-isopropylmaleate. This chain is 3-isopropylmalate dehydratase small subunit, found in Shewanella putrefaciens (strain CN-32 / ATCC BAA-453).